The following is a 1391-amino-acid chain: DNA-directed RNA polymerase subunit beta (1391 aa).

It belongs to the RNA polymerase beta chain family. As to quaternary structure, the RNAP catalytic core consists of 2 alpha, 1 beta, 1 beta' and 1 omega subunit. When a sigma factor is associated with the core the holoenzyme is formed, which can initiate transcription.

It catalyses the reaction RNA(n) + a ribonucleoside 5'-triphosphate = RNA(n+1) + diphosphate. Functionally, DNA-dependent RNA polymerase catalyzes the transcription of DNA into RNA using the four ribonucleoside triphosphates as substrates. The polypeptide is DNA-directed RNA polymerase subunit beta (Mycoplasma pneumoniae (strain ATCC 29342 / M129 / Subtype 1) (Mycoplasmoides pneumoniae)).